Consider the following 397-residue polypeptide: Tryptophan synthase beta chain (397 aa).

An N6-(pyridoxal phosphate)lysine modification is found at Lys87.

It belongs to the TrpB family. In terms of assembly, tetramer of two alpha and two beta chains. The cofactor is pyridoxal 5'-phosphate.

It catalyses the reaction (1S,2R)-1-C-(indol-3-yl)glycerol 3-phosphate + L-serine = D-glyceraldehyde 3-phosphate + L-tryptophan + H2O. Its pathway is amino-acid biosynthesis; L-tryptophan biosynthesis; L-tryptophan from chorismate: step 5/5. The beta subunit is responsible for the synthesis of L-tryptophan from indole and L-serine. In Klebsiella pneumoniae (strain 342), this protein is Tryptophan synthase beta chain.